The following is a 662-amino-acid chain: Glutathione hydrolase 7 (662 aa).

The Cytoplasmic portion of the chain corresponds to 1–106; sequence MAAENEASQE…AAECSCRQDG (106 aa). Phosphoserine occurs at positions 17, 72, 79, and 83. Residues 26 to 90 are disordered; the sequence is SFPRLPEDEP…DGSPLRETRK (65 aa). The segment covering 72 to 83 has biased composition (low complexity); that stretch reads SSSSEMGSQDGS. The helical; Signal-anchor for type II membrane protein transmembrane segment at 107 to 127 threads the bilayer; that stretch reads LTVIVTACLTFATGVTVALVM. The Extracellular portion of the chain corresponds to 128 to 662; that stretch reads QIYFGDPQIF…SPDAAGATIL (535 aa). N-linked (GlcNAc...) asparagine glycans are attached at residues N198, N267, N283, N330, N353, N394, N519, N523, and N586.

It belongs to the gamma-glutamyltransferase family. Heterodimer composed of the light and heavy chains. The active site is located in the light chain. Cleaved by autocatalysis into a large and a small subunit and the autocatalytic cleavage is essential to the functional activation of the enzyme.

It is found in the membrane. It carries out the reaction an N-terminal (5-L-glutamyl)-[peptide] + an alpha-amino acid = 5-L-glutamyl amino acid + an N-terminal L-alpha-aminoacyl-[peptide]. The enzyme catalyses glutathione + H2O = L-cysteinylglycine + L-glutamate. The catalysed reaction is an S-substituted glutathione + H2O = an S-substituted L-cysteinylglycine + L-glutamate. The protein operates within sulfur metabolism; glutathione metabolism. Functionally, hydrolyzes and transfers gamma-glutamyl moieties from glutathione and other gamma-glutamyl compounds to acceptors. The polypeptide is Glutathione hydrolase 7 (Mus musculus (Mouse)).